Here is a 614-residue protein sequence, read N- to C-terminus: Protein NRT1/ PTR FAMILY 7.3 (614 aa).

The next 2 membrane-spanning stretches (helical) occupy residues W41–V61 and W87–G107. A Phosphothreonine modification is found at T111. Transmembrane regions (helical) follow at residues I114 to L134, M152 to Y172, I196 to I216, W226 to V246, P355 to V375, I390 to Y410, M435 to Y455, L515 to V535, and F559 to K579. A disordered region spans residues M592–V614. The span at Q593 to E606 shows a compositional bias: acidic residues.

This sequence belongs to the major facilitator superfamily. Proton-dependent oligopeptide transporter (POT/PTR) (TC 2.A.17) family. As to expression, high expression in roots. Barely detected in shoots. Expressed in root pericycle cells close to the xylem.

The protein resides in the cell membrane. Functionally, low-affinity proton-dependent bidirectional nitrate transporter. Involved in nitrate loading into xylem and not in nitrate uptake. Not involved in histidine or dipeptides transport. This Arabidopsis thaliana (Mouse-ear cress) protein is Protein NRT1/ PTR FAMILY 7.3 (NPF7.3).